The following is an 81-amino-acid chain: Dermaseptin-B7 (81 aa).

Positions 1–22 are cleaved as a signal peptide; that stretch reads MASLKKSLFLVLFLGLVSLSIC. A propeptide spanning residues 23-44 is cleaved from the precursor; sequence EEEKRENEDEEEQEDDEQSEMK. The disordered stretch occupies residues 24 to 48; that stretch reads EEKRENEDEEEQEDDEQSEMKRGLW. Residues 30-40 are compositionally biased toward acidic residues; sequence EDEEEQEDDEQ. Residue V78 is modified to Valine amide. A propeptide spanning residues 80 to 81 is cleaved from the precursor; the sequence is EQ.

It belongs to the frog skin active peptide (FSAP) family. Dermaseptin subfamily. As to expression, expressed by the skin glands.

The protein localises to the secreted. Has antimicrobial activity. This Phyllomedusa bicolor (Two-colored leaf frog) protein is Dermaseptin-B7 (DRG1).